Consider the following 382-residue polypeptide: MISCHSFTMTPSAPNSTVLPSATPVCPQSSACRWRGLIETYRPYLPVSDQTPVVTLLEGNTPLIPAPAIAKRIGKDVRVFVKYDGLNPTGSFKDRGMTMAISKAKEAGAKAVICASTGNTSAAAAAYARRAGLRAFVIIPDGYVALGKLGQALIYGAEVIAIDGNFDDALTTVRQLSEHYPVTLVNSVNPYRLEGQKTAAFEIVDVLGQAPDWLCIPVGNAGNITAYWMGFCQYKELGKGDRLPRMMGFQAAGSAPFIQGQPISHPETLATAIRIGNPANWDKAWAASRESNGEFHPVTDAEILEAYRILAAEEGVFCEPASAASVAGLLKQKDQVPAGATVVCVLTGNGLKDPDCAVQNSGNQVKAGLKPDLEIVAKAMGF.

The residue at position 93 (Lys-93) is an N6-(pyridoxal phosphate)lysine. Residues Asn-119, 219–223 (GNAGN), and Thr-347 each bind pyridoxal 5'-phosphate.

This sequence belongs to the threonine synthase family. Pyridoxal 5'-phosphate is required as a cofactor.

The catalysed reaction is O-phospho-L-homoserine + H2O = L-threonine + phosphate. It participates in amino-acid biosynthesis; L-threonine biosynthesis; L-threonine from L-aspartate: step 5/5. Its function is as follows. Catalyzes the gamma-elimination of phosphate from L-phosphohomoserine and the beta-addition of water to produce L-threonine. The sequence is that of Threonine synthase (thrC) from Synechocystis sp. (strain ATCC 27184 / PCC 6803 / Kazusa).